The following is a 123-amino-acid chain: Cysteine proteinase inhibitor 8 (123 aa).

The N-terminal stretch at 1-19 (MARIPLLLALLLAVSAAAA) is a signal peptide. In terms of domain architecture, Cystatin spans 33 to 91 (GGWSPITDVGDPHIQELGGWAVERHASLSSDGLRFRRVTSGEQQVVSGMNYRLVVSASD). Residues 76 to 80 (QVVSG) carry the Secondary area of contact motif.

It belongs to the cystatin family. Phytocystatin subfamily.

The protein resides in the secreted. Its function is as follows. Specific inhibitor of cysteine proteinases. Probably involved in the regulation of endogenous processes and in defense against pests and pathogens. The protein is Cysteine proteinase inhibitor 8 of Oryza sativa subsp. japonica (Rice).